The sequence spans 437 residues: (S)-6-hydroxynicotine oxidase (437 aa).

FAD is bound by residues serine 16, glutamate 35 to arginine 37, arginine 43, glycine 57 to glycine 60, valine 231, serine 405, and glutamate 413 to isoleucine 415.

This sequence belongs to the flavin monoamine oxidase family. In terms of assembly, homodimer. FAD serves as cofactor.

It carries out the reaction (S)-6-hydroxynicotine + O2 + H2O = 6-hydroxypseudooxynicotine + H2O2. The catalysed reaction is (S)-6-hydroxynicotine + O2 = 6-hydroxy-N-methylmyosmine + H2O2. The protein operates within alkaloid degradation; nicotine degradation; 6-hydroxypseudooxynicotine from nicotine (S-isomer route): step 2/2. Its activity is regulated as follows. Partially inhibited by Co(2+) or Zn(2+) and significantly inhibited by Ag(+), Cu(2+) and Hg(2+). Involved in the degradation of L-nicotine. Catalyzes the oxidation of (S)-6-hydroxynicotine (6-hydroxy-L-nicotine) to 6-hydroxypseudooxynicotine. Oxidation of the pyrrolidine ring of (S)-6-hydroxynicotine leads to the formation of the optically inactive 6-hydroxy-N-methylmyosmine, which hydrolyzes spontaneously to 6-hydroxypseudooxynicotine. Acts with absolute stereospecificity on the L-form of 6-hydroxynicotine. Also involved in the degradation of nornicotine, and catalyzes the oxidation of 6-hydroxynornicotine to 6-hydroxymyosmine, which hydrolyzes to 6-hydroxypseudooxynornicotine. In vitro, converts (S)-nicotine into N-methylmyosmine, which spontaneously hydrolyzes spontaneously into pseudooxynicotine, but catalytic efficiency is about 1900-fold higher with (S)-6-hydroxynicotine. The polypeptide is (S)-6-hydroxynicotine oxidase (Shinella sp. (strain HZN7)).